Here is a 58-residue protein sequence, read N- to C-terminus: Light-harvesting protein B-870 alpha chain (58 aa).

Residues 1-15 lie on the Cytoplasmic side of the membrane; it reads MSKFYKIWLVFDPRR. Residues 16-36 traverse the membrane as a helical segment; the sequence is VFVAQGVFLFLLAVLIHLILL. Histidine 32 serves as a coordination point for a bacteriochlorophyll. At 37–58 the chain is on the periplasmic side; sequence STPAFNWLTVATAKHGYVAAAQ.

The protein belongs to the antenna complex alpha subunit family. As to quaternary structure, the core complex is formed by different alpha and beta chains, binding bacteriochlorophyll molecules, and arranged most probably in tetrameric structures disposed around the reaction center. The non-pigmented gamma chains may constitute additional components.

Its subcellular location is the cell inner membrane. In terms of biological role, antenna complexes are light-harvesting systems, which transfer the excitation energy to the reaction centers. The protein is Light-harvesting protein B-870 alpha chain (pufA) of Rhodobacter capsulatus (Rhodopseudomonas capsulata).